Consider the following 132-residue polypeptide: Small ribosomal subunit protein uS8 (132 aa).

Belongs to the universal ribosomal protein uS8 family. Part of the 30S ribosomal subunit. Contacts proteins S5 and S12.

Functionally, one of the primary rRNA binding proteins, it binds directly to 16S rRNA central domain where it helps coordinate assembly of the platform of the 30S subunit. This chain is Small ribosomal subunit protein uS8, found in Rhodospirillum centenum (strain ATCC 51521 / SW).